Here is a 342-residue protein sequence, read N- to C-terminus: Protein-ribulosamine 3-kinase, chloroplastic (342 aa).

A chloroplast-targeting transit peptide spans 1–46; the sequence is MANVALLSAASPSTSSAAPRLRHVARRRPSRRSACPRSAASRLSIM. 141-143 is a binding site for ATP; sequence EFI. Asp-246 functions as the Proton acceptor in the catalytic mechanism.

It belongs to the fructosamine kinase family.

Its subcellular location is the plastid. It is found in the chloroplast. The catalysed reaction is N(6)-D-ribulosyl-L-lysyl-[protein] + ATP = N(6)-(3-O-phospho-D-ribulosyl)-L-lysyl-[protein] + ADP + H(+). It catalyses the reaction N(6)-(D-erythrulosyl)-L-lysyl-[protein] + ATP = N(6)-(3-O-phospho-D-erythrulosyl)-L-lysyl-[protein] + ADP + H(+). Its function is as follows. Initiates a process leading to the deglycation of proteins. Phosphorylates low-molecular-mass and protein-bound erythrulosamines and ribulosamines, but not fructosamines or psicosamines, on the third carbon of the sugar moiety. Protein-bound erythrulosamine 3-phosphates and ribulosamine 3-phosphates are unstable and decompose under physiological conditions. In Oryza sativa subsp. japonica (Rice), this protein is Protein-ribulosamine 3-kinase, chloroplastic.